The sequence spans 244 residues: Protein crossbronx (244 aa).

The region spanning 20–176 is the UBC core domain; it reads QQEYKILAEY…VQKNIKESKD (157 aa).

This sequence belongs to the ubiquitin-conjugating enzyme family. FTS subfamily.

This Drosophila yakuba (Fruit fly) protein is Protein crossbronx (cbx).